We begin with the raw amino-acid sequence, 252 residues long: Trypsin iota (252 aa).

The signal sequence occupies residues 1 to 19 (MAVYGIVATVLVLLLLGDA). Residues 20-27 (SDVEATGR) constitute a propeptide, activation peptide. Residues 28–250 (IIGGSDQLIR…LRPWIVKAAN (223 aa)) enclose the Peptidase S1 domain. An intrachain disulfide couples cysteine 53 to cysteine 69. Active-site charge relay system residues include histidine 68 and aspartate 113. Intrachain disulfides connect cysteine 175–cysteine 193 and cysteine 202–cysteine 226. Serine 206 serves as the catalytic Charge relay system.

This sequence belongs to the peptidase S1 family.

The protein localises to the secreted. Its subcellular location is the extracellular space. The enzyme catalyses Preferential cleavage: Arg-|-Xaa, Lys-|-Xaa.. The protein is Trypsin iota (iotaTry) of Drosophila melanogaster (Fruit fly).